A 357-amino-acid chain; its full sequence is Retinoic acid-induced protein 3 (357 aa).

Residues 1-33 (MATTVPDGCRNGLKSKYYRLCDKAEAWGIVLET) are Extracellular-facing. The helical transmembrane segment at 34–54 (VATAGVVTSVAFMLTLPILVC) threads the bilayer. At 55–68 (KVQDSNRRKMLPTQ) the chain is on the cytoplasmic side. The helical transmembrane segment at 69–89 (FLFLLGVLGIFGLTFAFIIGL) threads the bilayer. The Extracellular portion of the chain corresponds to 90–97 (DGSTGPTR). Residues 98-118 (FFLFGILFSICFSCLLAHAVS) traverse the membrane as a helical segment. Residues 119–129 (LTKLVRGRKPL) lie on the Cytoplasmic side of the membrane. A helical transmembrane segment spans residues 130 to 150 (SLLVILGLAVGFSLVQDVIAI). The Extracellular portion of the chain corresponds to 151-176 (EYIVLTMNRTNVNVFSELSAPRRNED). Residue Asn158 is glycosylated (N-linked (GlcNAc...) asparagine). The helical transmembrane segment at 177–197 (FVLLLTYVLFLMALTFLMSSF) threads the bilayer. The Cytoplasmic segment spans residues 198-212 (TFCGSFTGWKRHGAH). The chain crosses the membrane as a helical span at residues 213–233 (IYLTMLLSIAIWVAWITLLML). The Extracellular segment spans residues 234 to 247 (PDFDRRWDDTILSS). The helical transmembrane segment at 248-268 (ALAANGWVFLLAYVSPEFWLL) threads the bilayer. The Cytoplasmic portion of the chain corresponds to 269–357 (TKQRNPMDYP…KDYEVKKEGS (89 aa)). Ser301 is subject to Phosphoserine. 2 positions are modified to phosphotyrosine: Tyr317 and Tyr320. Ser345 carries the phosphoserine modification. A phosphotyrosine mark is found at Tyr347 and Tyr350.

The protein belongs to the G-protein coupled receptor 3 family. As to quaternary structure, interacts (via its transmembrane domain) with EGFR. In terms of processing, phosphorylated in two conserved double-tyrosine motifs, Tyr-317/Tyr-320 and Tyr-347/Tyr-350, by EGFR; leading to inactivation of the tumor suppressive function of GPRC5A in lung cancer cells. Tyr-317 and Tyr-320 are the preferred residues responsible for EGFR-mediated GPRC5A phosphorylation. As to expression, expressed at high level in fetal and adult lung tissues but repressed in most human lung cancers. Constitutively expressed in fetal kidney and adult placenta, kidney, prostate, testis, ovary, small intestine, colon, stomach, and spinal cord at low to moderate levels. Not detectable in fetal heart, brain, and liver and adult heart, brain, liver, skeletal muscle, pancreas, spleen, thymus, and peripheral leukocytes. According to PubMed:10783259, expressed at low but detectable level in pancreas and heart.

Its subcellular location is the cell membrane. The protein localises to the cytoplasmic vesicle membrane. Its function is as follows. Orphan receptor. Could be involved in modulating differentiation and maintaining homeostasis of epithelial cells. This retinoic acid-inducible GPCR provide evidence for a possible interaction between retinoid and G-protein signaling pathways. Functions as a negative modulator of EGFR signaling. May act as a lung tumor suppressor. The protein is Retinoic acid-induced protein 3 (GPRC5A) of Homo sapiens (Human).